A 216-amino-acid polypeptide reads, in one-letter code: U1 small nuclear ribonucleoprotein C (216 aa).

The segment at 4–36 adopts a Matrin-type zinc-finger fold; the sequence is FFCDYCDVYLTHDSMSVRKAHNAGRNHLRNVVE. Composition is skewed to pro residues over residues 68-80, 87-198, and 206-216; these read AMAPPGAFPPPFG, QLPP…PAPP, and PGPPPGLSEKR. The interval 68–216 is disordered; the sequence is AMAPPGAFPP…GPPPGLSEKR (149 aa).

This sequence belongs to the U1 small nuclear ribonucleoprotein C family. U1 snRNP is composed of the 7 core Sm proteins B/B', D1, D2, D3, E, F and G that assemble in a heptameric protein ring on the Sm site of the small nuclear RNA to form the core snRNP, and at least 3 U1 snRNP-specific proteins U1-70K, U1-A and U1-C. U1-C interacts with U1 snRNA and the 5' splice-site region of the pre-mRNA.

Its subcellular location is the nucleus. Its function is as follows. Component of the spliceosomal U1 snRNP, which is essential for recognition of the pre-mRNA 5' splice-site and the subsequent assembly of the spliceosome. U1-C is directly involved in initial 5' splice-site recognition for both constitutive and regulated alternative splicing. The interaction with the 5' splice-site seems to precede base-pairing between the pre-mRNA and the U1 snRNA. Stimulates commitment or early (E) complex formation by stabilizing the base pairing of the 5' end of the U1 snRNA and the 5' splice-site region. This is U1 small nuclear ribonucleoprotein C from Aspergillus fumigatus (strain ATCC MYA-4609 / CBS 101355 / FGSC A1100 / Af293) (Neosartorya fumigata).